A 321-amino-acid polypeptide reads, in one-letter code: Glycerol-3-phosphate phosphatase (321 aa).

Catalysis depends on Asp-34, which acts as the Nucleophile. The Mg(2+) site is built by Asp-34, Asp-36, and Asp-260. Catalysis depends on Asp-36, which acts as the Proton donor.

Belongs to the HAD-like hydrolase superfamily. CbbY/CbbZ/Gph/YieH family. Homodimer. Mg(2+) serves as cofactor. In terms of tissue distribution, expression was confirmed in liver, adipose tissue, testis and pancreatic islet.

It carries out the reaction O-phospho-L-tyrosyl-[protein] + H2O = L-tyrosyl-[protein] + phosphate. It catalyses the reaction sn-glycerol 1-phosphate + H2O = glycerol + phosphate. The catalysed reaction is sn-glycerol 3-phosphate + H2O = glycerol + phosphate. Functionally, glycerol-3-phosphate phosphatase hydrolyzing glycerol-3-phosphate into glycerol. Thereby, regulates the cellular levels of glycerol-3-phosphate a metabolic intermediate of glucose, lipid and energy metabolism. Was also shown to have a 2-phosphoglycolate phosphatase activity and a tyrosine-protein phosphatase activity. However, their physiological relevance is unclear. In vitro, also has a phosphatase activity toward ADP, ATP, GDP and GTP. In Rattus norvegicus (Rat), this protein is Glycerol-3-phosphate phosphatase.